The sequence spans 469 residues: D-3-phosphoglycerate dehydrogenase 1 (469 aa).

Phosphoserine is present on residues S22, S29, and S33. NAD(+)-binding positions include 208–209 (HI), D228, 285–287 (ASR), and D311. Residue R287 is part of the active site. E316 is a catalytic residue. Catalysis depends on H347, which acts as the Proton donor. Position 347-350 (347-350 (HIGG)) interacts with NAD(+). The ACT domain maps to 399–469 (RVLYIHQNVP…SAKISIRLLY (71 aa)).

Belongs to the D-isomer specific 2-hydroxyacid dehydrogenase family.

It carries out the reaction (2R)-3-phosphoglycerate + NAD(+) = 3-phosphooxypyruvate + NADH + H(+). The enzyme catalyses (R)-2-hydroxyglutarate + NAD(+) = 2-oxoglutarate + NADH + H(+). The protein operates within amino-acid biosynthesis; L-serine biosynthesis; L-serine from 3-phospho-D-glycerate: step 1/3. In terms of biological role, catalyzes the reversible oxidation of 3-phospho-D-glycerate to 3-phosphonooxypyruvate, the first step of the phosphorylated L-serine biosynthesis pathway. Also catalyzes the reversible oxidation of 2-hydroxyglutarate to 2-oxoglutarate. The sequence is that of D-3-phosphoglycerate dehydrogenase 1 (SER3) from Saccharomyces cerevisiae (strain ATCC 204508 / S288c) (Baker's yeast).